A 1423-amino-acid chain; its full sequence is Histone-lysine N-methyltransferase ATXR7 (1423 aa).

One can recognise a GYF domain in the interval 263-312; the sequence is HACWFLVDGEGRNHGPHSILELFSWQQHGYVSDAALIRDGENKLRPITLA. Disordered regions lie at residues 923-960, 1057-1097, and 1115-1158; these read CKDH…EGTK, CSIS…SSTD, and LPCH…GRPK. The span at 936–949 shows a compositional bias: basic residues; the sequence is QKVKKAHTSKLKRK. Residues 950–959 show a composition bias toward basic and acidic residues; that stretch reads NLSDARDEGT. Over residues 1057–1071 the composition is skewed to polar residues; the sequence is CSISQKGRKSSQSSI. Composition is skewed to basic and acidic residues over residues 1115–1124 and 1140–1157; these read LPCHTSDKLQ and HTTE…DGRP. Positions 1266-1383 constitute an SET domain; the sequence is KHLRFQQSKI…AGEEISYNYK (118 aa). Tyrosine 1382 lines the S-adenosyl-L-methionine pocket.

The protein belongs to the class V-like SAM-binding methyltransferase superfamily. Histone-lysine methyltransferase family. TRX/MLL subfamily. Expressed in the shoot and root apices, vascular tissues and mesophyll cells of rosette leaves.

It localises to the nucleus. The catalysed reaction is L-lysyl(4)-[histone H3] + 3 S-adenosyl-L-methionine = N(6),N(6),N(6)-trimethyl-L-lysyl(4)-[histone H3] + 3 S-adenosyl-L-homocysteine + 3 H(+). It carries out the reaction L-lysyl(36)-[histone H3] + 2 S-adenosyl-L-methionine = N(6),N(6)-dimethyl-L-lysyl(36)-[histone H3] + 2 S-adenosyl-L-homocysteine + 2 H(+). In terms of biological role, histone methyltransferase involved in regulation of flowering time. Required for the expression of the flowering repressors FLC and MADS-box genes of the MAF family. Required for histone H3 dimethylation on 'Lys-36' H3K36me2 at the FLC locus. Required for histone H3 trimethylation on 'Lys-4' (H3K4me3) at the FLC locus. Prevents trimethylation on 'Lys-27' (H3K27me3) at the same locus. Involved in the control of seed dormancy and germination. The polypeptide is Histone-lysine N-methyltransferase ATXR7 (Arabidopsis thaliana (Mouse-ear cress)).